Here is a 311-residue protein sequence, read N- to C-terminus: Tyrosine recombinase XerC (311 aa).

The 87-residue stretch at 11–97 (DALAQPLERF…SLRSFLDFLI (87 aa)) folds into the Core-binding (CB) domain. Residues 118–298 (TLPKNLDVDE…DFQHLAQVYD (181 aa)) form the Tyr recombinase domain. Active-site residues include Arg-157, Lys-181, His-250, Arg-253, and His-276. The O-(3'-phospho-DNA)-tyrosine intermediate role is filled by Tyr-285.

It belongs to the 'phage' integrase family. XerC subfamily. In terms of assembly, forms a cyclic heterotetrameric complex composed of two molecules of XerC and two molecules of XerD.

Its subcellular location is the cytoplasm. Functionally, site-specific tyrosine recombinase, which acts by catalyzing the cutting and rejoining of the recombining DNA molecules. The XerC-XerD complex is essential to convert dimers of the bacterial chromosome into monomers to permit their segregation at cell division. It also contributes to the segregational stability of plasmids. This chain is Tyrosine recombinase XerC, found in Vibrio cholerae serotype O1 (strain ATCC 39541 / Classical Ogawa 395 / O395).